Reading from the N-terminus, the 520-residue chain is Mitogen-activated protein kinase kinase 3 (520 aa).

S69 is modified (phosphoserine). The region spanning 83-339 (MRVFGAIGSG…ADQLLSHPFI (257 aa)) is the Protein kinase domain. Residues 89–97 (IGSGASSVV) and K112 contribute to the ATP site. The active-site Proton acceptor is the D207. S235 carries the post-translational modification Phosphoserine. T241 and T245 each carry phosphothreonine. The NTF2 domain maps to 366–516 (LADMLTIHYY…YFLAKQELYI (151 aa)).

Belongs to the protein kinase superfamily. STE Ser/Thr protein kinase family. MAP kinase kinase subfamily. In terms of assembly, interacts with MPK1, MPK2 and MPK7. Interacts with P.syringae type III effector HopF2. Interacts with MPK14. Binds to MAPKKK17 and MAPKKK18. Binds to MAPKKK20. In terms of processing, phosphorylation at Ser-235 and Thr-241 by MAP kinase kinase kinases positively regulates kinase activity. Phosphorylated by MAPKKK20. In terms of tissue distribution, mostly expressed in leaves, and, to a lower extent, in roots, seedlings, flower buds, flowers and siliques.

Its subcellular location is the nucleus. It is found in the cytoplasm. It catalyses the reaction L-seryl-[protein] + ATP = O-phospho-L-seryl-[protein] + ADP + H(+). The enzyme catalyses L-threonyl-[protein] + ATP = O-phospho-L-threonyl-[protein] + ADP + H(+). The catalysed reaction is L-tyrosyl-[protein] + ATP = O-phospho-L-tyrosyl-[protein] + ADP + H(+). Functionally, MKK3-MPK6 module plays an important role in the jasmonate signal transduction pathway through the negative regulation of MYC2/JIN1 expression. Activates by phosphorylation the downstream MPK6, MPK7 and MPK8. MKK3-MPK7 module acts as a positive regulator of PR1 gene expression. MKK3-MPK8 module negatively regulates ROS accumulation through controlling expression of the RBOHD gene. Component of the abscisic acid (ABA) signaling pathway that may act as ABA signal transducer in the context of abiotic stresses. Activator of the C group MAP kinases. Activates MPK7 in response to ABA. Mitogen-activated protein kinase (MAPK) that is specifically regulated by MAPKKK20 and mediates signaling that regulates cortical microtubule functions. The polypeptide is Mitogen-activated protein kinase kinase 3 (Arabidopsis thaliana (Mouse-ear cress)).